We begin with the raw amino-acid sequence, 185 residues long: Lysine-rich arabinogalactan protein 17 (185 aa).

The N-terminal stretch at 1–21 (MTRNILLTVTLICIVFITVGG) is a signal peptide. The interval 25–160 (ATAPIHSPST…FSPAADDQSG (136 aa)) is disordered. The span at 43 to 68 (SPAISPAAPTPESTEAPAKTPVEAPV) shows a compositional bias: low complexity. Over residues 69–88 (EAPPSPTPASTPQISPPAPS) the composition is skewed to pro residues. Over residues 111 to 122 (TKHKKKTKKHKT) the composition is skewed to basic residues. Positions 135–146 (PPAPPGEAPGPG) are enriched in pro residues. Ser-159 is lipidated: GPI-anchor amidated serine. Residues 160-185 (GAQRISVVIQMVGAAAIAWSLLVLAF) constitute a propeptide, removed in mature form.

The protein belongs to the lysine-rich AGP family. O-glycosylated on the hydroxyproline residues. In terms of tissue distribution, predominantly expressed in open flowers. Also expressed in leaves and stems, and at a lower level in roots.

The protein resides in the cell membrane. Functionally, proteoglycan that seems to be implicated in diverse developmental roles such as differentiation, cell-cell recognition, embryogenesis and programmed cell death. The protein is Lysine-rich arabinogalactan protein 17 (AGP17) of Arabidopsis thaliana (Mouse-ear cress).